The chain runs to 565 residues: Galactoside 2-alpha-L-fucosyltransferase (565 aa).

Topologically, residues 1–43 (MNMLIKRVIAIKNPRGDDNNNNKLSDLETLTDKCTTCPLTLMR) are cytoplasmic. A helical; Signal-anchor for type II membrane protein transmembrane segment spans residues 44–64 (VMAFFVVSFMLFSVLFSLSVV). The Lumenal portion of the chain corresponds to 65 to 565 (LRDPPSDAAI…MSWGLKLVDN (501 aa)). Asn-159, Asn-263, Asn-407, and Asn-509 each carry an N-linked (GlcNAc...) asparagine glycan.

It belongs to the glycosyltransferase 37 family.

The protein localises to the golgi apparatus. It is found in the golgi stack membrane. Its pathway is protein modification; protein glycosylation. Its function is as follows. Involved in cell wall biosynthesis. Adds the terminal fucosyl residue on xyloglucan side chains. The protein is Galactoside 2-alpha-L-fucosyltransferase (FT1) of Pisum sativum (Garden pea).